A 414-amino-acid polypeptide reads, in one-letter code: MTQANLSETLFKPRFKHTETSTLVRRFNRGSQPPMQSALDGKNVPHWYRMINRLMWIWRGIDPREILDVQARIVMSDAERTDDDLYDTVIGYRGGNWIYEWAKQAMDWQQKACQEQDAMRSGRYWLHASTLYNIAAYPHLKGDELAEQAQALANRAYEEAAQRLPGSLREMEFAVPGGSPVTAFLHMPKGDGPFPTVLMCGGLDAMQTDYYTLYERYFAPRGIAMLTLDMPSVGFSSKWKLTQDSSLLHQHVLKALPNVPWVDHTRVAAFGFRFGANVAVRLAYLEAPRLKAVACLGPVVHALLSDPQRQSTVPEMYLDVLASRLGMHDASDEALRVELNRYSLKVQGLLGRRCPTPMLSGFWKNDPFSPEEESRLITTSSSDGKLIEIPFNPVYRNFDRALQEITDWINHRLC.

This sequence belongs to the FrsA family.

The enzyme catalyses a carboxylic ester + H2O = an alcohol + a carboxylate + H(+). Catalyzes the hydrolysis of esters. This is Esterase FrsA from Salmonella dublin (strain CT_02021853).